Reading from the N-terminus, the 287-residue chain is Melatonin receptor type 1B-A (287 aa).

At 1–28 the chain is on the extracellular side; the sequence is MPENVSLIRNRTEVGQGRAWGSGAGARP. N-linked (GlcNAc...) asparagine glycosylation is found at Asn-4 and Asn-10. The chain crosses the membrane as a helical span at residues 29-49; sequence AWVVMVLAGVLIFTSVVDVLG. The Cytoplasmic segment spans residues 50–69; the sequence is NVLVIISVLRNRKLRNAGNA. Residues 70–90 form a helical membrane-spanning segment; the sequence is FVVSLAFADLLVVCYPYPLVL. Topologically, residues 91–107 are extracellular; it reads HAMLHAGWLPGEMECKV. Cys-105 and Cys-182 are joined by a disulfide. A helical transmembrane segment spans residues 108–128; sequence SGFLMGASVIGSIFNITAIAI. Over 129 to 149 the chain is Cytoplasmic; the sequence is NRYCFICQANTYEKIYGRAGT. The chain crosses the membrane as a helical span at residues 150–170; sequence LVLLTLVWVLTAIAILPNLSL. The Extracellular segment spans residues 171 to 192; the sequence is GSLTYDPRVYSCTFSQTTSAGY. Residues 193–213 form a helical membrane-spanning segment; the sequence is TIAVVTVHFLLPIAVVTFCYL. The Cytoplasmic segment spans residues 214 to 245; sequence RIWVLVLRVRRRVTTDVRPRLRPSELRHFLTM. The helical transmembrane segment at 246–266 threads the bilayer; it reads FVVFVLFAVCWAPLNLIGLAV. The Extracellular segment spans residues 267 to 275; it reads AVDPPRVGP. A helical membrane pass occupies residues 276–287; that stretch reads LVPDWLFVMSYF.

Belongs to the G-protein coupled receptor 1 family.

It is found in the cell membrane. High affinity receptor for melatonin. The activity of this receptor is mediated by pertussis toxin sensitive G proteins that inhibits adenylate cyclase activity. In Danio rerio (Zebrafish), this protein is Melatonin receptor type 1B-A (mtnr1ba).